The following is an 855-amino-acid chain: MSDEKNLGVSQKLVSPSRSTSSCSSKQGSRQDSWEVVEGLRGEMTYTQEPPVQKGFLLKKRKWPLKGWHKRFFCLEKGILKYAKSQADIEREKLHGCIDVGLSVMSVKKSSKCIDLDTEEHIYHLKVKSEELFDEWVSKLRHHRMYRQNEIAMFPRDVNHFFSGSSVTDSAPGVFESVSSRKRSSLSKQNSFPPGSNLSFSCGGDTRVPFWLQSSEDMEKCSKDMAHCHAYLLEMSQLLESMDVLHRTYSAPAINAIQVPKPFSGPVRLHSSNPNLSTLDFGEEKSYSDGSEASSEFSKMQEDLCHVAHKVYFALRSAFNSISVEREKLKQLMELDTSPSPSAQVVGLKHALSSALAQNTDLKERLRRIHAESLLLDPPAVPKPGDNLAEENSRDEGRALVHQLSNESRLSITDSLSEFFDAQEVLLSPSSSENEISDDDSYVSDISDNLSLDNLSNDLDNERQTLGPVLESSGEARSKRRTSLPAPGPNTSSVSLWSILRNNIGKDLSKVAMPVELNEPLNTLQRLCEELEYSELLDKASRIPSPLERMVYVAAFAISAYASSYFRAGSKPFNPVLGETYECIRQDKGFQFFAEQVSHHPPISACHAESGNFVFWQDVRWKNKFWGKSMEIVPIGTTHVTLPAFGDHFEWNKVTSCIHNILSGQRWIEHYGEIDIKNLNDDSCHCKVNFIKAKYWSTNAHEIEGTVFDRSGKAVHRLFGKWHESIYCGGASSSTCVWRANPMPKGYEQYYGFTQFALELNEMDPLSRSLLPPTDTRFRPDQRLLEEGNIEEAEVQKQRIEKLQRERRRVLEENGVEHQPRFFRKSSDDAWVSNGTYLELRKDLGFSKLDHPVLW.

The tract at residues 1 to 32 is disordered; it reads MSDEKNLGVSQKLVSPSRSTSSCSSKQGSRQD. Residues serine 15 and serine 33 each carry the phosphoserine modification. Residues 15–31 show a composition bias toward low complexity; the sequence is SPSRSTSSCSSKQGSRQ. Positions 50–145 constitute a PH domain; it reads PPVQKGFLLK…WVSKLRHHRM (96 aa). The FFAT 1 motif lies at 161-167; that stretch reads FFSGSSV. A phosphoserine mark is found at serine 199, serine 250, serine 272, serine 277, serine 288, serine 291, serine 340, serine 393, serine 405, and serine 408. Residues 274–293 form a disordered region; it reads PNLSTLDFGEEKSYSDGSEA. Positions 377–396 are disordered; sequence DPPAVPKPGDNLAEENSRDE. The short motif at 450–454 is the FFAT 2 element; sequence LSLDN. Residues 468 to 490 form a disordered region; the sequence is PVLESSGEARSKRRTSLPAPGPN.

Belongs to the OSBP family. Homodimer. Interacts with RRAS. Interacts (phosphorylated form) with VAPA. Interacts with OSBPL6. Phosphorylation is enhanced in vitro by phorbol-12-myristate-13-acetate (PMA), forskolin and calcium ionophore A23187. Phosphorylation seems to be stimulated in conditions of low cell-cell (or cell-matrix) adhesion. Expressed in spinal ganglia. Expressed in a subset of small lymphocytes (at protein level).

It localises to the endoplasmic reticulum membrane. The protein resides in the cytoplasm. The protein localises to the cytosol. Its subcellular location is the cell membrane. It is found in the cell projection. It localises to the filopodium tip. The protein resides in the nucleus membrane. Its function is as follows. Phosphoinositide-binding protein which associates with both cell and endoplasmic reticulum (ER) membranes. Can bind to the ER membrane protein VAPA and recruit VAPA to plasma membrane sites, thus linking these intracellular compartments. The ORP3-VAPA complex stimulates RRAS signaling which in turn attenuates integrin beta-1 (ITGB1) activation at the cell surface. With VAPA, may regulate ER morphology. Has a role in regulation of the actin cytoskeleton, cell polarity and cell adhesion. Binds to phosphoinositides with preference for PI(3,4)P2 and PI(3,4,5)P3. Also binds 25-hydroxycholesterol and cholesterol. In Mus musculus (Mouse), this protein is Oxysterol-binding protein-related protein 3 (Osbpl3).